The following is a 131-amino-acid chain: Biogenesis of lysosome-related organelles complex 1 subunit 5 (131 aa).

This sequence belongs to the BLOC1S5 family. Component of the biogenesis of lysosome-related organelles complex-1 (BLOC-1) composed at least of blos-1, blos-2, blos-4, dsbn-1, glo-2, mutd-1 and snpn-1.

Its function is as follows. Component of the biogenesis of lysosome-related organelles complex-1 (BLOC-1) involved in gut granule biogenesis. The protein is Biogenesis of lysosome-related organelles complex 1 subunit 5 (mutd-1) of Caenorhabditis elegans.